A 137-amino-acid polypeptide reads, in one-letter code: Large ribosomal subunit protein uL16 (137 aa).

The protein belongs to the universal ribosomal protein uL16 family. In terms of assembly, part of the 50S ribosomal subunit.

Binds 23S rRNA and is also seen to make contacts with the A and possibly P site tRNAs. The protein is Large ribosomal subunit protein uL16 of Xanthobacter autotrophicus (strain ATCC BAA-1158 / Py2).